Consider the following 447-residue polypeptide: Rab GDP dissociation inhibitor alpha (447 aa).

It belongs to the Rab GDI family. In terms of assembly, interacts with RHOH. Interacts with the non-phosphorylated forms of RAB1A, RAB3A, RAB5A, RAB5B, RAB5C, RAB8A, RAB8B, RAB10, RAB12, RAB35, and RAB43. Brain; predominant in neural and sensory tissues.

It is found in the cytoplasm. It localises to the golgi apparatus. Its subcellular location is the trans-Golgi network. In terms of biological role, regulates the GDP/GTP exchange reaction of most Rab proteins by inhibiting the dissociation of GDP from them, and the subsequent binding of GTP to them. Promotes the dissociation of GDP-bound Rab proteins from the membrane and inhibits their activation. Promotes the dissociation of RAB1A, RAB3A, RAB5A and RAB10 from membranes. The sequence is that of Rab GDP dissociation inhibitor alpha (GDI1) from Homo sapiens (Human).